Here is a 468-residue protein sequence, read N- to C-terminus: Ribulose bisphosphate carboxylase large chain (468 aa).

An N6,N6,N6-trimethyllysine modification is found at Lys7. Substrate is bound by residues Asn116 and Thr166. Catalysis depends on Lys168, which acts as the Proton acceptor. Lys170 serves as a coordination point for substrate. Mg(2+)-binding residues include Lys194, Asp196, and Glu197. At Lys194 the chain carries N6-carboxylysine. His287 functions as the Proton acceptor in the catalytic mechanism. Substrate-binding residues include Arg288, His320, and Ser372.

The protein belongs to the RuBisCO large chain family. Type I subfamily. As to quaternary structure, heterohexadecamer of 8 large chains and 8 small chains; disulfide-linked. The disulfide link is formed within the large subunit homodimers. Mg(2+) serves as cofactor. The disulfide bond which can form in the large chain dimeric partners within the hexadecamer appears to be associated with oxidative stress and protein turnover.

The protein localises to the plastid. Its subcellular location is the chloroplast. The catalysed reaction is 2 (2R)-3-phosphoglycerate + 2 H(+) = D-ribulose 1,5-bisphosphate + CO2 + H2O. It carries out the reaction D-ribulose 1,5-bisphosphate + O2 = 2-phosphoglycolate + (2R)-3-phosphoglycerate + 2 H(+). In terms of biological role, ruBisCO catalyzes two reactions: the carboxylation of D-ribulose 1,5-bisphosphate, the primary event in carbon dioxide fixation, as well as the oxidative fragmentation of the pentose substrate in the photorespiration process. Both reactions occur simultaneously and in competition at the same active site. The protein is Ribulose bisphosphate carboxylase large chain of Cornus alternifolia (Pagoda dogwood).